Here is a 665-residue protein sequence, read N- to C-terminus: DNA ligase (665 aa).

NAD(+) is bound by residues 32 to 36, 81 to 82, and E110; these read DSEYD and SL. K112 serves as the catalytic N6-AMP-lysine intermediate. Residues R133, E167, K283, and K307 each coordinate NAD(+). The Zn(2+) site is built by C401, C404, C419, and C424. Positions 586-665 constitute a BRCT domain; that stretch reads EGHPDFSGKT…AAFIEKQNGI (80 aa).

Belongs to the NAD-dependent DNA ligase family. LigA subfamily. It depends on Mg(2+) as a cofactor. Mn(2+) is required as a cofactor.

It catalyses the reaction NAD(+) + (deoxyribonucleotide)n-3'-hydroxyl + 5'-phospho-(deoxyribonucleotide)m = (deoxyribonucleotide)n+m + AMP + beta-nicotinamide D-nucleotide.. Its function is as follows. DNA ligase that catalyzes the formation of phosphodiester linkages between 5'-phosphoryl and 3'-hydroxyl groups in double-stranded DNA using NAD as a coenzyme and as the energy source for the reaction. It is essential for DNA replication and repair of damaged DNA. The protein is DNA ligase of Staphylococcus epidermidis (strain ATCC 35984 / DSM 28319 / BCRC 17069 / CCUG 31568 / BM 3577 / RP62A).